The sequence spans 232 residues: MRLLGCFFLIFLTWGSARAQGEYCHGWLDSAGNYQAGFQCPEDFDTADANICCGSCALRYCCAAADARLEQGSCTNHRELEKSGVSAQPVYVPFLIVGSIFIAFIIVGSLVAVYCCTCLRPKQTSQQPMRFTLRSYPPETLPMILTSGNLRTPSRQSSTATSSTSTGGSVRRLSSSRADPGYLVSSPPPPYSSAHSIHLNPSSTFLVSNQYFPYPLQPEAIANKSCPDFRQS.

The first 19 residues, 1-19 (MRLLGCFFLIFLTWGSARA), serve as a signal peptide directing secretion. The Lumenal segment spans residues 20 to 93 (QGEYCHGWLD…GVSAQPVYVP (74 aa)). Residues 94-114 (FLIVGSIFIAFIIVGSLVAVY) form a helical membrane-spanning segment. Over 115 to 232 (CCTCLRPKQT…NKSCPDFRQS (118 aa)) the chain is Cytoplasmic. The disordered stretch occupies residues 146-185 (TSGNLRTPSRQSSTATSSTSTGGSVRRLSSSRADPGYLVS). A compositionally biased stretch (low complexity) spans 151-177 (RTPSRQSSTATSSTSTGGSVRRLSSSR).

This sequence belongs to the shisa family. Interacts with fzd8 and fgfr1.

It localises to the endoplasmic reticulum membrane. Functionally, plays an essential role in the maturation of presomitic mesoderm cells by individual attenuation of both fgf and wnt signaling. Regulates head and somite developmen. Inhibits both wnt and fgf signaling through the regulation of protein maturation and cell surface transportation of their receptors within the endoplasmic reticulum. The chain is Protein shisa-3 (shisa3) from Xenopus laevis (African clawed frog).